The sequence spans 345 residues: Ferredoxin--NADP reductase (345 aa).

FAD is bound by residues D38, Q46, Y51, V91, F129, D295, and T336.

The protein belongs to the ferredoxin--NADP reductase type 2 family. Homodimer. Requires FAD as cofactor.

It carries out the reaction 2 reduced [2Fe-2S]-[ferredoxin] + NADP(+) + H(+) = 2 oxidized [2Fe-2S]-[ferredoxin] + NADPH. This is Ferredoxin--NADP reductase from Rhodospirillum rubrum (strain ATCC 11170 / ATH 1.1.1 / DSM 467 / LMG 4362 / NCIMB 8255 / S1).